The chain runs to 261 residues: U1 small nuclear ribonucleoprotein 70 kDa homolog (261 aa).

The 79-residue stretch at 100–178 (KTMFLSRLSY…RRIVVDVERG (79 aa)) folds into the RRM domain. The interval 192–261 (GLGGRHYTKE…DSSPKRRRYN (70 aa)) is disordered. Residues 198–215 (YTKERPRRERGSRFRGDS) show a composition bias toward basic and acidic residues. Residues 216-235 (GFRGGYRGGFRKSSGGGSRF) are compositionally biased toward gly residues.

As to quaternary structure, component of the spliceosome, where it is associated with snRNP U1. Associates with U1 snRNA.

The protein localises to the nucleus. Involved in nuclear mRNA splicing. Essential for growth. The protein is U1 small nuclear ribonucleoprotein 70 kDa homolog of Schizosaccharomyces pombe (strain 972 / ATCC 24843) (Fission yeast).